The sequence spans 210 residues: Guanylate kinase (210 aa).

The Guanylate kinase-like domain maps to 6-184; the sequence is GTLYIISAPS…ALQDLKCIIQ (179 aa). Position 13–20 (13–20) interacts with ATP; that stretch reads APSGAGKT.

The protein belongs to the guanylate kinase family.

It is found in the cytoplasm. It carries out the reaction GMP + ATP = GDP + ADP. Functionally, essential for recycling GMP and indirectly, cGMP. The chain is Guanylate kinase from Nitrosospira multiformis (strain ATCC 25196 / NCIMB 11849 / C 71).